The primary structure comprises 191 residues: Cell division protein SepF (191 aa).

Low complexity predominate over residues 151-165 (SSSPEEASPSSVPTE). Residues 151–191 (SSSPEEASPSSVPTENTPQYSLGKNTTPEPAWGNSKLSAYS) form a disordered region. A compositionally biased stretch (polar residues) spans 166 to 178 (NTPQYSLGKNTTP).

Belongs to the SepF family. In terms of assembly, homodimer. Interacts with FtsZ.

It localises to the cytoplasm. Cell division protein that is part of the divisome complex and is recruited early to the Z-ring. Probably stimulates Z-ring formation, perhaps through the cross-linking of FtsZ protofilaments. Its function overlaps with FtsA. This chain is Cell division protein SepF, found in Prochlorococcus marinus (strain MIT 9215).